A 260-amino-acid polypeptide reads, in one-letter code: MTSNQRMLFYSCIAKGTVILAEFASKEEPGIEDLALRCIENVPPHHSMISHTVHKRTYALIIDGLFSYFAILDEVVAKSESVWLFNRLKSATESLMEDGSTADSLDNPTQHCLQSKLDPVFAEIAAIGGNHNKDLELEFGSPRSIAREIKSNNQSLDSSKGRKGGALMPLLGKPLRVLKNKKRLQTEAKSEGHWNEKKMDLGGGGKGVRNGLIHDHHHRQKAKQIWRKHVWIVLMFDLCICLVLFGIWLWICQGFQCIDG.

The Longin domain occupies 12–114 (CIAKGTVILA…LDNPTQHCLQ (103 aa)). A helical; Anchor for type IV membrane protein transmembrane segment spans residues 231 to 251 (WIVLMFDLCICLVLFGIWLWI).

It belongs to the synaptobrevin family.

The protein localises to the membrane. Its function is as follows. Non-SNARE longin protein involved in membrane-trafficking machinery. The sequence is that of Phytolongin Phyl2.1 from Arabidopsis thaliana (Mouse-ear cress).